The sequence spans 250 residues: DNA polymerase sliding clamp (250 aa).

Belongs to the PCNA family. In terms of assembly, homotrimer. The subunits circularize to form a toroid; DNA passes through its center. Replication factor C (RFC) is required to load the toroid on the DNA.

Functionally, sliding clamp subunit that acts as a moving platform for DNA processing. Responsible for tethering the catalytic subunit of DNA polymerase and other proteins to DNA during high-speed replication. The chain is DNA polymerase sliding clamp from Methanococcus maripaludis (strain DSM 14266 / JCM 13030 / NBRC 101832 / S2 / LL).